A 134-amino-acid polypeptide reads, in one-letter code: Natriuretic peptides B (134 aa).

The signal sequence occupies residues 1–26; it reads MDPQTAPSRALLLLLFLHLAFLGGRS. O-linked (Xyl...) (chondroitin sulfate) serine glycosylation occurs at serine 41. A glycan (O-linked (HexNAc...) threonine; Partial) is linked at threonine 62. O-linked (HexNAc...) serine glycosylation is found at serine 63 and serine 70. A glycan (O-linked (HexNAc...) threonine) is linked at threonine 74. Serine 79 carries O-linked (HexNAc...) serine glycosylation. O-linked (HexNAc...) threonine; Partial glycosylation is present at threonine 84. The O-linked (HexNAc...) threonine glycan is linked to threonine 97. The cysteines at positions 112 and 128 are disulfide-linked.

Belongs to the natriuretic peptide family. Post-translationally, the precursor molecule is proteolytically cleaved by the endoproteases FURIN or CORIN at Arg-102 to produce brain natriuretic peptide 32 and NT-proBNP. This likely occurs after it has been secreted into the blood, either during circulation or in the target cells. CORIN also cleaves the precursor molecule at additional residues including Arg-99 and possibly Lys-105. In patients with heart failure, processing and degradation of natriuretic peptides B occurs but is delayed, possibly due to a decrease in enzyme level or activity of CORIN and DPP4. Undergoes further proteolytic cleavage by various proteases such as DPP4, MME and possibly FAP, to give rise to a variety of shorter peptides. Cleaved at Pro-104 by the prolyl endopeptidase FAP (seprase) activity (in vitro). Degraded by IDE. During IDE degradation, the resulting products initially increase the activation of NPR1 and can also stimulate NPR2 to produce cGMP before the fragments are completely degraded and inactivated by IDE (in vitro). In terms of processing, O-glycosylated on at least seven residues. In cardiomyocytes, glycosylation at Thr-97 is essential for the stability and processing of the extracellular natriuretic peptides B. Glycosylation, especially at Thr-97, may also be important for brain natriuretic peptide 32 stability and/or extracellular distribution. Glycosylation at Thr-97 appears to inhibit FURIN- or CORIN-mediated proteolytic processing, at least in HEK293 cells. Detected in the cardiac atria (at protein level). Detected in the kidney distal tubular cells (at protein level).

The protein localises to the secreted. Its function is as follows. Cardiac hormone that plays a key role in mediating cardio-renal homeostasis. May also function as a paracrine antifibrotic factor in the heart. Acts by specifically binding and stimulating NPR1 to produce cGMP, which in turn activates effector proteins that drive various biological responses. Involved in regulating the extracellular fluid volume and maintaining the fluid-electrolyte balance through natriuresis, diuresis, vasorelaxation, and inhibition of renin and aldosterone secretion. Binds the clearance receptor NPR3. May affect cardio-renal homeostasis. Able to promote the production of cGMP although its potency is very low compared to brain natriuretic peptide 32. Functionally, may have a role in cardio-renal homeostasis. Able to promote the production of cGMP. This is Natriuretic peptides B (NPPB) from Homo sapiens (Human).